The sequence spans 281 residues: 2,3,4,5-tetrahydropyridine-2,6-dicarboxylate N-succinyltransferase (281 aa).

Substrate contacts are provided by R108 and D145.

This sequence belongs to the transferase hexapeptide repeat family. As to quaternary structure, homotrimer.

The protein localises to the cytoplasm. It catalyses the reaction (S)-2,3,4,5-tetrahydrodipicolinate + succinyl-CoA + H2O = (S)-2-succinylamino-6-oxoheptanedioate + CoA. The protein operates within amino-acid biosynthesis; L-lysine biosynthesis via DAP pathway; LL-2,6-diaminopimelate from (S)-tetrahydrodipicolinate (succinylase route): step 1/3. In Nitrobacter hamburgensis (strain DSM 10229 / NCIMB 13809 / X14), this protein is 2,3,4,5-tetrahydropyridine-2,6-dicarboxylate N-succinyltransferase.